A 907-amino-acid polypeptide reads, in one-letter code: Protein translocase subunit SecA (907 aa).

ATP is bound by residues Gln87, 105–109, and Asp506; that span reads GEGKT. Residues 834–850 show a composition bias toward basic and acidic residues; the sequence is LEQQREEEAREQAEKMK. The tract at residues 834–907 is disordered; it reads LEQQREEEAR…KYKQCHGKIE (74 aa). The segment covering 864–875 has biased composition (low complexity); it reads QPQPSQQQGEQP. Zn(2+) is bound by residues Cys891, Cys893, Cys902, and His903. Positions 897-907 are enriched in basic residues; that stretch reads KKYKQCHGKIE.

It belongs to the SecA family. Monomer and homodimer. Part of the essential Sec protein translocation apparatus which comprises SecA, SecYEG and auxiliary proteins SecDF-YajC and YidC. The cofactor is Zn(2+).

Its subcellular location is the cell inner membrane. It localises to the cytoplasm. The enzyme catalyses ATP + H2O + cellular proteinSide 1 = ADP + phosphate + cellular proteinSide 2.. In terms of biological role, part of the Sec protein translocase complex. Interacts with the SecYEG preprotein conducting channel. Has a central role in coupling the hydrolysis of ATP to the transfer of proteins into and across the cell membrane, serving both as a receptor for the preprotein-SecB complex and as an ATP-driven molecular motor driving the stepwise translocation of polypeptide chains across the membrane. The polypeptide is Protein translocase subunit SecA (Alcanivorax borkumensis (strain ATCC 700651 / DSM 11573 / NCIMB 13689 / SK2)).